The chain runs to 178 residues: Interleukin-10 (178 aa).

Residues 1 to 18 (MHSSALLCCLVLLTGVRA) form the signal peptide. 2 cysteine pairs are disulfide-bonded: C30–C126 and C80–C132. N134 is a glycosylation site (N-linked (GlcNAc...) asparagine).

This sequence belongs to the IL-10 family. Homodimer. Interacts with IL10RA and IL10RB.

Its subcellular location is the secreted. Its function is as follows. Major immune regulatory cytokine that acts on many cells of the immune system where it has profound anti-inflammatory functions, limiting excessive tissue disruption caused by inflammation. Mechanistically, IL10 binds to its heterotetrameric receptor comprising IL10RA and IL10RB leading to JAK1 and STAT2-mediated phosphorylation of STAT3. In turn, STAT3 translocates to the nucleus where it drives expression of anti-inflammatory mediators. Targets antigen-presenting cells (APCs) such as macrophages and monocytes and inhibits their release of pro-inflammatory cytokines including granulocyte-macrophage colony-stimulating factor /GM-CSF, granulocyte colony-stimulating factor/G-CSF, IL-1 alpha, IL-1 beta, IL-6, IL-8 and TNF-alpha. Also interferes with antigen presentation by reducing the expression of MHC-class II and co-stimulatory molecules, thereby inhibiting their ability to induce T cell activation. In addition, controls the inflammatory response of macrophages by reprogramming essential metabolic pathways including mTOR signaling. This chain is Interleukin-10 (IL10), found in Macaca fascicularis (Crab-eating macaque).